We begin with the raw amino-acid sequence, 332 residues long: Ferredoxin--NADP reductase (332 aa).

Positions 36, 44, 49, 91, 124, and 327 each coordinate FAD.

The protein belongs to the ferredoxin--NADP reductase type 2 family. In terms of assembly, homodimer. The cofactor is FAD.

It catalyses the reaction 2 reduced [2Fe-2S]-[ferredoxin] + NADP(+) + H(+) = 2 oxidized [2Fe-2S]-[ferredoxin] + NADPH. In Streptococcus thermophilus (strain CNRZ 1066), this protein is Ferredoxin--NADP reductase.